The sequence spans 344 residues: Hypoxia-inducible factor 1-alpha inhibitor (344 aa).

A2 carries the N-acetylalanine modification. One can recognise a JmjC domain in the interval 133–303 (GRVYLQQTLN…PKRIEYPLKA (171 aa)). Residue Y136 participates in 2-oxoglutarate binding. Residues D143 and 173 to 174 (LT) contribute to the substrate site. T187 lines the 2-oxoglutarate pocket. Residues H190 and D192 each coordinate Fe cation. 192-194 (DEQ) provides a ligand contact to substrate. Residues N196 and K205 each coordinate 2-oxoglutarate. A substrate-binding site is contributed by 229 to 230 (RQ). H270 contacts Fe cation. N285 contributes to the 2-oxoglutarate binding site. Substrate-binding residues include A291 and N312.

As to quaternary structure, homodimer; homodimerization is essential for catalytic activity. Fe(2+) is required as a cofactor.

Its subcellular location is the nucleus. It localises to the cytoplasm. It is found in the perinuclear region. The enzyme catalyses L-asparaginyl-[hypoxia-inducible factor alpha subunit] + 2-oxoglutarate + O2 = (3S)-3-hydroxy-L-asparaginyl-[hypoxia-inducible factor alpha subunit] + succinate + CO2. It catalyses the reaction L-histidyl-[ankyrin-repeat domain protein] + 2-oxoglutarate + O2 = (3S)-3-hydroxy-L-histidyl-[ankyrin-repeat domain protein] + succinate + CO2. It carries out the reaction L-asparaginyl-[ankyrin-repeat domain protein] + 2-oxoglutarate + O2 = (3S)-3-hydroxy-L-asparaginyl-[ankyrin-repeat domain protein] + succinate + CO2. The catalysed reaction is L-aspartyl-[ankyrin-repeat domain protein] + 2-oxoglutarate + O2 = (3S)-3-hydroxy-L-aspartyl-[ankyrin-repeat domain protein] + succinate + CO2. Hydroxylates a specific Asn residue in the C-terminal transactivation domain (CAD) of HIF-1 alpha. The hydroxylation prevents interaction of HIF-1 with transcriptional coactivators. Also hydroxylates specific Asn, Asp and His residues within ankyrin repeat domain-containing proteins. This Danio rerio (Zebrafish) protein is Hypoxia-inducible factor 1-alpha inhibitor (hif1an).